The following is a 255-amino-acid chain: Probable pyridoxal 5'-phosphate synthase subunit PDX2 (255 aa).

46–48 (GES) serves as a coordination point for L-glutamine. Cys78 serves as the catalytic Nucleophile. L-glutamine contacts are provided by residues Arg108 and 142–143 (IR). Catalysis depends on charge relay system residues His202 and Glu204. The tract at residues 225-255 (GASSSSSKTIVSVGETSAGPEPAKPDLPIFQ) is disordered.

Belongs to the glutaminase PdxT/SNO family. In terms of assembly, interacts with PDX1.1 or PDX1.3, but not with PDX1.2. Binds to RPA2A. Strongly expressed in roots, stems, leaves and flowers.

The protein localises to the cytoplasm. The catalysed reaction is aldehydo-D-ribose 5-phosphate + D-glyceraldehyde 3-phosphate + L-glutamine = pyridoxal 5'-phosphate + L-glutamate + phosphate + 3 H2O + H(+). The enzyme catalyses L-glutamine + H2O = L-glutamate + NH4(+). It participates in cofactor biosynthesis; pyridoxal 5'-phosphate biosynthesis. In terms of biological role, catalyzes the hydrolysis of glutamine to glutamate and ammonia as part of the biosynthesis of pyridoxal 5'-phosphate. The resulting ammonia molecule is channeled to the active site of PDX1. Involved in the indirect resistance to singlet oxygen-generating photosensitizers. The chain is Probable pyridoxal 5'-phosphate synthase subunit PDX2 (PDX2) from Arabidopsis thaliana (Mouse-ear cress).